The sequence spans 190 residues: Translation initiation factor IF-3 (190 aa).

This sequence belongs to the IF-3 family. As to quaternary structure, monomer.

The protein localises to the cytoplasm. Functionally, IF-3 binds to the 30S ribosomal subunit and shifts the equilibrium between 70S ribosomes and their 50S and 30S subunits in favor of the free subunits, thus enhancing the availability of 30S subunits on which protein synthesis initiation begins. The sequence is that of Translation initiation factor IF-3 from Prochlorococcus marinus subsp. pastoris (strain CCMP1986 / NIES-2087 / MED4).